A 331-amino-acid polypeptide reads, in one-letter code: DNA-directed RNA polymerase subunit alpha (331 aa).

The tract at residues 1–226 (MLIAQRPTLT…ELFGLARELN (226 aa)) is alpha N-terminal domain (alpha-NTD). The segment at 243–331 (LSSELSMPIE…SYDEDETTTN (89 aa)) is alpha C-terminal domain (alpha-CTD).

The protein belongs to the RNA polymerase alpha chain family. As to quaternary structure, homodimer. The RNAP catalytic core consists of 2 alpha, 1 beta, 1 beta' and 1 omega subunit. When a sigma factor is associated with the core the holoenzyme is formed, which can initiate transcription.

The catalysed reaction is RNA(n) + a ribonucleoside 5'-triphosphate = RNA(n+1) + diphosphate. Its function is as follows. DNA-dependent RNA polymerase catalyzes the transcription of DNA into RNA using the four ribonucleoside triphosphates as substrates. In Clavibacter sepedonicus (Clavibacter michiganensis subsp. sepedonicus), this protein is DNA-directed RNA polymerase subunit alpha.